The sequence spans 318 residues: dTDP-6-deoxy-L-talose 4-dehydrogenase (NAD(P)(+)) (318 aa).

Residues 19 to 20, 60 to 61, asparagine 95, threonine 120, tyrosine 145, and lysine 149 contribute to the NAD(+) site; these read FI and DP. Positions 120 and 145 each coordinate substrate. The Proton acceptor role is filled by tyrosine 145.

This sequence belongs to the NAD(P)-dependent epimerase/dehydratase family.

The catalysed reaction is dTDP-6-deoxy-beta-L-talose + NAD(+) = dTDP-4-dehydro-beta-L-rhamnose + NADH + H(+). The enzyme catalyses dTDP-6-deoxy-beta-L-talose + NADP(+) = dTDP-4-dehydro-beta-L-rhamnose + NADPH + H(+). Its function is as follows. Catalyzes the reduction of dTDP-6-deoxy-L-lyxo-4-hexulose to dTDP-6-deoxy-L-talose. Can use NAD(+) or NADP(+). This chain is dTDP-6-deoxy-L-talose 4-dehydrogenase (NAD(P)(+)) (tal), found in Kitasatospora kifunensis (Streptomyces kifunensis).